Here is a 349-residue protein sequence, read N- to C-terminus: Achromobactin transport system permease protein CbrC (349 aa).

10 helical membrane-spanning segments follow: residues leucine 32–leucine 52, valine 82–isoleucine 102, isoleucine 111–alanine 131, leucine 138–tryptophan 158, valine 168–phenylalanine 188, proline 190–tryptophan 210, leucine 216–valine 236, valine 263–alanine 283, leucine 290–valine 310, and aspartate 325–isoleucine 345.

Belongs to the binding-protein-dependent transport system permease family. FecCD subfamily.

The protein resides in the cell inner membrane. Part of the binding-protein-dependent transport system CbrABCD for uptake of the siderophore achromobactin. Probably responsible for the translocation of the substrate across the membrane. The sequence is that of Achromobactin transport system permease protein CbrC (cbrC) from Dickeya dadantii (strain 3937) (Erwinia chrysanthemi (strain 3937)).